Here is a 1153-residue protein sequence, read N- to C-terminus: Reverse gyrase 2 (1153 aa).

The segment at 1 to 41 adopts an RG N-terminal-type zinc-finger fold; sequence MLKVNYLFGCPNCNGSISVDRLHAGIPCETCLPGAVEKLDI. Residues Cys-10, Cys-13, Cys-28, and Cys-31 each contribute to the Zn(2+) site. Residues Gln-86 and 103–110 contribute to the ATP site; that span reads APTGVGKT. The region spanning 90-276 is the Helicase ATP-binding domain; sequence LNKLVRGESF…ALRFLVGFEP (187 aa). A DEAD box motif is present at residues 184–187; that stretch reads DDAD. A topoisomerase I region spans residues 567 to 1153; that stretch reads MNFKTALLVV…VNPLQSEQYV (587 aa). Positions 571-735 constitute a Toprim domain; sequence TALLVVESPT…NIFRISYNEI (165 aa). A Mg(2+)-binding site is contributed by Glu-577. The segment at 654 to 681 adopts an RG C-terminal-type zinc-finger fold; the sequence is LYRCMSCGKTITKKVSTCPYCGSSMINS. 4 residues coordinate Zn(2+): Cys-657, Cys-660, Cys-671, and Cys-674. Asp-704 contacts Mg(2+). In terms of domain architecture, Topo IA-type catalytic spans 751–1142; that stretch reads NESLVKAQIA…DLLNEIKNIK (392 aa). The active-site O-(5'-phospho-DNA)-tyrosine intermediate is Tyr-894.

It in the N-terminal section; belongs to the DEAD box helicase family. DDVD subfamily. The protein in the C-terminal section; belongs to the type IA topoisomerase family. Monomer. Zn(2+) is required as a cofactor. The cofactor is Mg(2+).

The protein localises to the cytoplasm. It catalyses the reaction ATP + H2O = ADP + phosphate + H(+). In terms of biological role, modifies the topological state of DNA by introducing positive supercoils in an ATP-dependent process, increasing the linking number in steps of +1. Binds to single-stranded DNA, transiently cleaves and then rejoins the ends, introducing a positive supercoil in the process. The scissile phosphodiester is attacked by the catalytic tyrosine of the enzyme, resulting in the formation of a DNA-(5'-phosphotyrosyl)-enzyme intermediate. Probably involved in rewinding DNA strands in regions of the chromosome that have opened up to allow replication, transcription, DNA repair and/or for DNA protection. Functionally, might be a cell cycle protein. The chain is Reverse gyrase 2 from Sulfolobus acidocaldarius (strain ATCC 33909 / DSM 639 / JCM 8929 / NBRC 15157 / NCIMB 11770).